The following is a 449-amino-acid chain: MFKTLTQNLTKIFDRLVNSGILTENQIDTAMRDVRVALLESDVALPVIKGFIAEVKQKALGQEVIKSVSPGQMIIKIIHEEMINLLASSESTTKLNLNSKPPVNLLMVGLQGGGKTTASGKLALLLKNQNKKVLLVSLDTYRPAAQEQLAIIANSVNIDSLPIVQGEQPLDIVKRAISEAKIFAYDVVIYDTAGRIQIDNVMMEEALAIKKILNPTETLLVIDSMTGQDAVVTARSFSDKLEISGLILSRIDGDTKGGAALSVKYLTQKPIKFLSCGEKLTDLEEFDAERLASRILDMGDIISFVKKAASIVDREEAERTAIKLKSGKFDLNDYLKHMRSIKKMGGFGSILSMLPGSGKIIDQIDQSKLDSRIIEHQEAIILSMTLKERKNPDIINASRRKRIAAGAGMTVQKVNILLKQYKQISAVMKKASKMNPQNLFRSGISKLFS.

GTP contacts are provided by residues 109-116 (GLQGGGKT), 191-195 (DTAGR), and 249-252 (SRID).

The protein belongs to the GTP-binding SRP family. SRP54 subfamily. Part of the signal recognition particle protein translocation system, which is composed of SRP and FtsY. SRP is a ribonucleoprotein composed of Ffh and a 4.5S RNA molecule.

The protein localises to the cytoplasm. The catalysed reaction is GTP + H2O = GDP + phosphate + H(+). Involved in targeting and insertion of nascent membrane proteins into the cytoplasmic membrane. Binds to the hydrophobic signal sequence of the ribosome-nascent chain (RNC) as it emerges from the ribosomes. The SRP-RNC complex is then targeted to the cytoplasmic membrane where it interacts with the SRP receptor FtsY. Interaction with FtsY leads to the transfer of the RNC complex to the Sec translocase for insertion into the membrane, the hydrolysis of GTP by both Ffh and FtsY, and the dissociation of the SRP-FtsY complex into the individual components. In Rickettsia typhi (strain ATCC VR-144 / Wilmington), this protein is Signal recognition particle protein.